Here is an 89-residue protein sequence, read N- to C-terminus: Small ribosomal subunit protein uS15 (89 aa).

Belongs to the universal ribosomal protein uS15 family. Part of the 30S ribosomal subunit. Forms a bridge to the 50S subunit in the 70S ribosome, contacting the 23S rRNA.

Its function is as follows. One of the primary rRNA binding proteins, it binds directly to 16S rRNA where it helps nucleate assembly of the platform of the 30S subunit by binding and bridging several RNA helices of the 16S rRNA. Functionally, forms an intersubunit bridge (bridge B4) with the 23S rRNA of the 50S subunit in the ribosome. The polypeptide is Small ribosomal subunit protein uS15 (Streptococcus agalactiae serotype Ia (strain ATCC 27591 / A909 / CDC SS700)).